The chain runs to 396 residues: Putative nickel insertion protein (396 aa).

Belongs to the LarC family.

This Methanosarcina barkeri (strain Fusaro / DSM 804) protein is Putative nickel insertion protein.